The sequence spans 491 residues: Argininosuccinate lyase (491 aa).

The protein belongs to the lyase 1 family. Argininosuccinate lyase subfamily.

It is found in the cytoplasm. It carries out the reaction 2-(N(omega)-L-arginino)succinate = fumarate + L-arginine. Its pathway is amino-acid biosynthesis; L-arginine biosynthesis; L-arginine from L-ornithine and carbamoyl phosphate: step 3/3. This is Argininosuccinate lyase from Methanosarcina mazei (strain ATCC BAA-159 / DSM 3647 / Goe1 / Go1 / JCM 11833 / OCM 88) (Methanosarcina frisia).